Consider the following 156-residue polypeptide: SPbeta prophage-derived uncharacterized protein YosH (156 aa).

The protein is SPbeta prophage-derived uncharacterized protein YosH (yosH) of Bacillus subtilis (strain 168).